The following is a 504-amino-acid chain: tRNA (uracil-5-)-methyltransferase homolog B (504 aa).

The transit peptide at 1 to 16 (MAGLKRRVPLHSLRYF) directs the protein to the mitochondrion. Residues glutamine 323, glutamate 373, and asparagine 423 each coordinate S-adenosyl-L-methionine. The active-site Nucleophile is the cysteine 451. Glutamate 497 (proton acceptor) is an active-site residue.

Belongs to the class I-like SAM-binding methyltransferase superfamily. RNA M5U methyltransferase family.

It is found in the mitochondrion. It localises to the mitochondrion matrix. The catalysed reaction is uridine(54) in tRNA + S-adenosyl-L-methionine = 5-methyluridine(54) in tRNA + S-adenosyl-L-homocysteine + H(+). The enzyme catalyses a uridine in 12S rRNA + S-adenosyl-L-methionine = a 5-methyluridine in 12S rRNA + S-adenosyl-L-homocysteine + H(+). In terms of biological role, mitochondrial S-adenosyl-L-methionine-dependent methyltransferase that catalyzes the formation of 5-methyl-uridine in tRNAs and 12S rRNA. Catalyzes the methylation of uridine at position 54 (m5U54) in all tRNAs. Specifically methylates the uridine in position 429 of 12S rRNA (m5U429). Does not affect RNA stability or mitochondrial translation. This chain is tRNA (uracil-5-)-methyltransferase homolog B, found in Homo sapiens (Human).